Here is a 313-residue protein sequence, read N- to C-terminus: Putative olfactory receptor 2B3 (313 aa).

At 1 to 25 (MNWENESSPKEFILLGFSDRAWLQM) the chain is on the extracellular side. Asparagine 5 is a glycosylation site (N-linked (GlcNAc...) asparagine). A helical transmembrane segment spans residues 26 to 49 (PLFVVLLISYTITIFGNVSIMMVC). Topologically, residues 50 to 57 (ILDPKLHT) are cytoplasmic. Residues 58–79 (PMYFFLTNLSILDLCYTTTTVP) form a helical membrane-spanning segment. Residues 80–100 (HMLVNIGCNKKTISYAGCVAH) are Extracellular-facing. Cysteine 97 and cysteine 189 are disulfide-bonded. Residues 101–120 (LIIFLALGATECLLLAVMSF) traverse the membrane as a helical segment. The Cytoplasmic segment spans residues 121 to 139 (DRYVAVCRPLHYVVIMNYW). A helical transmembrane segment spans residues 140–158 (FCLRMAAFSWLIGFGNSVL). At 159–195 (QSSLTLNMPRCGHQEVDHFFCEVPALLKLSCADTKPI) the chain is on the extracellular side. Residues 196–219 (EAELFFFSVLILLIPVTLILISYG) traverse the membrane as a helical segment. The Cytoplasmic segment spans residues 220-236 (FIAQAVLKIRSAEGRQK). The chain crosses the membrane as a helical span at residues 237–259 (AFGTCGSHMIVVSLFYGTAIYMY). Topologically, residues 260 to 272 (LQPPSSTSKDWGK) are extracellular. The chain crosses the membrane as a helical span at residues 273–292 (MVSLFYGIITSMLNSLIYSL). Residues 293–313 (RNKDMKEAFKRLMPRIFFCKK) lie on the Cytoplasmic side of the membrane.

It belongs to the G-protein coupled receptor 1 family.

The protein resides in the cell membrane. In terms of biological role, odorant receptor. In Homo sapiens (Human), this protein is Putative olfactory receptor 2B3 (OR2B3).